We begin with the raw amino-acid sequence, 30 residues long: Trypsin inhibitor 2 (30 aa).

3 disulfides stabilise this stretch: Cys3–Cys20, Cys10–Cys22, and Cys16–Cys29.

This sequence belongs to the protease inhibitor I7 (squash-type serine protease inhibitor) family.

The protein localises to the secreted. In terms of biological role, inhibits trypsin. The polypeptide is Trypsin inhibitor 2 (Luffa aegyptiaca (Sponge gourd)).